A 1201-amino-acid polypeptide reads, in one-letter code: Putative disease resistance protein At4g19050 (1201 aa).

ATP is bound at residue G33 to T40. 14 LRR repeats span residues K469–Q491, G492–N514, Q517–S539, M540–T562, E680–V701, N703–T725, H726–M748, Y750–L771, N773–T795, N796–L818, C820–L841, N843–T865, H866–M888, and Y890–S911. The span at D1162–H1180 shows a compositional bias: basic and acidic residues. The tract at residues D1162 to V1201 is disordered. Residues G1185–V1201 show a composition bias toward polar residues.

The protein belongs to the disease resistance NB-LRR family.

Its function is as follows. Potential disease resistance protein. This chain is Putative disease resistance protein At4g19050, found in Arabidopsis thaliana (Mouse-ear cress).